A 277-amino-acid polypeptide reads, in one-letter code: 2,3,4,5-tetrahydropyridine-2,6-dicarboxylate N-succinyltransferase (277 aa).

Residues Arg-106 and Asp-143 each contribute to the substrate site.

Belongs to the transferase hexapeptide repeat family. As to quaternary structure, homotrimer.

It is found in the cytoplasm. The catalysed reaction is (S)-2,3,4,5-tetrahydrodipicolinate + succinyl-CoA + H2O = (S)-2-succinylamino-6-oxoheptanedioate + CoA. It functions in the pathway amino-acid biosynthesis; L-lysine biosynthesis via DAP pathway; LL-2,6-diaminopimelate from (S)-tetrahydrodipicolinate (succinylase route): step 1/3. In Xylella fastidiosa (strain Temecula1 / ATCC 700964), this protein is 2,3,4,5-tetrahydropyridine-2,6-dicarboxylate N-succinyltransferase.